Here is a 97-residue protein sequence, read N- to C-terminus: Small ribosomal subunit protein bS20 (97 aa).

Belongs to the bacterial ribosomal protein bS20 family.

Functionally, binds directly to 16S ribosomal RNA. This is Small ribosomal subunit protein bS20 from Prochlorococcus marinus (strain MIT 9301).